We begin with the raw amino-acid sequence, 255 residues long: F-box/SPRY domain-containing protein 1 (255 aa).

Positions 3–51 (DPVAALCNYNVLEVIFSYLELDDLSHCSQVCKSWNLFLNDENSDVWRWH) constitute an F-box domain. Positions 61 to 253 (LKSDLLSSVS…VSMVYLGTPM (193 aa)) constitute a B30.2/SPRY domain.

This sequence belongs to the FBXO45/Fsn family. Component of an E3 ubiquitin ligase complex composed of hiw and Fsn.

It localises to the synapse. It participates in protein modification; protein ubiquitination. Its function is as follows. Required in the presynaptic motoneuron to down-regulate the levels of wnd and restrain synaptic terminal growth at the neuromuscular junction (NMJ). In Drosophila ananassae (Fruit fly), this protein is F-box/SPRY domain-containing protein 1.